The sequence spans 485 residues: Glutamyl-tRNA(Gln) amidotransferase subunit A (485 aa).

Catalysis depends on charge relay system residues Lys-78 and Ser-153. The Acyl-ester intermediate role is filled by Ser-177.

Belongs to the amidase family. GatA subfamily. As to quaternary structure, heterotrimer of A, B and C subunits.

It catalyses the reaction L-glutamyl-tRNA(Gln) + L-glutamine + ATP + H2O = L-glutaminyl-tRNA(Gln) + L-glutamate + ADP + phosphate + H(+). Its function is as follows. Allows the formation of correctly charged Gln-tRNA(Gln) through the transamidation of misacylated Glu-tRNA(Gln) in organisms which lack glutaminyl-tRNA synthetase. The reaction takes place in the presence of glutamine and ATP through an activated gamma-phospho-Glu-tRNA(Gln). This is Glutamyl-tRNA(Gln) amidotransferase subunit A from Geotalea daltonii (strain DSM 22248 / JCM 15807 / FRC-32) (Geobacter daltonii).